A 481-amino-acid polypeptide reads, in one-letter code: Ras-GEF domain-containing family member 1A (481 aa).

Residues 41 to 170 (QDGHLISGSL…AIAQMTQSLL (130 aa)) form the N-terminal Ras-GEF domain. One can recognise a Ras-GEF domain in the interval 214–461 (DPLVLAQQLT…FVASFESEGP (248 aa)).

In terms of tissue distribution, detected in brain and spinal cord. Highly expressed in a number of intrahepatic cholangiocarcinoma tissue biopsies.

Functionally, guanine nucleotide exchange factor (GEF) with specificity for RAP2A, KRAS, HRAS, and NRAS (in vitro). Plays a role in cell migration. This chain is Ras-GEF domain-containing family member 1A (RASGEF1A), found in Homo sapiens (Human).